The primary structure comprises 290 residues: 33 kDa chaperonin (290 aa).

2 disulfide bridges follow: Cys-235–Cys-237 and Cys-268–Cys-271.

It belongs to the HSP33 family. Under oxidizing conditions two disulfide bonds are formed involving the reactive cysteines. Under reducing conditions zinc is bound to the reactive cysteines and the protein is inactive.

Its subcellular location is the cytoplasm. Its function is as follows. Redox regulated molecular chaperone. Protects both thermally unfolding and oxidatively damaged proteins from irreversible aggregation. Plays an important role in the bacterial defense system toward oxidative stress. The protein is 33 kDa chaperonin of Streptococcus uberis (strain ATCC BAA-854 / 0140J).